Consider the following 481-residue polypeptide: 6-phosphogluconate dehydrogenase, decarboxylating (481 aa).

NADP(+)-binding positions include Gly11–Gly16, Asn34–Thr36, Val76–Ala78, and Asn104. Residues Asn104 and Ser130–Gly132 contribute to the substrate site. The Proton acceptor role is filled by Lys184. His187–Asn188 is a binding site for substrate. Residue Glu191 is the Proton donor of the active site. Substrate is bound by residues Tyr192, Lys259, Arg286, Arg445, and His451.

Belongs to the 6-phosphogluconate dehydrogenase family. In terms of assembly, homodimer.

It catalyses the reaction 6-phospho-D-gluconate + NADP(+) = D-ribulose 5-phosphate + CO2 + NADPH. The protein operates within carbohydrate degradation; pentose phosphate pathway; D-ribulose 5-phosphate from D-glucose 6-phosphate (oxidative stage): step 3/3. Functionally, catalyzes the oxidative decarboxylation of 6-phosphogluconate to ribulose 5-phosphate and CO(2), with concomitant reduction of NADP to NADPH. This is 6-phosphogluconate dehydrogenase, decarboxylating (Pgd) from Drosophila melanogaster (Fruit fly).